Reading from the N-terminus, the 242-residue chain is Host range factor p28 (242 aa).

The KilA-N domain maps to 21–131 (YIDEPNDIRL…QSILRGLVNW (111 aa)). The RING-type zinc finger occupies 173 to 226 (CGICYEVVYSKRLENDRYFGLLDSCNHIFCITCINIWHRTRRETGALDNCPICR).

Belongs to the orthopoxvirus OPG021 family.

Its subcellular location is the host cytoplasm. It catalyses the reaction S-ubiquitinyl-[E2 ubiquitin-conjugating enzyme]-L-cysteine + [acceptor protein]-L-lysine = [E2 ubiquitin-conjugating enzyme]-L-cysteine + N(6)-ubiquitinyl-[acceptor protein]-L-lysine.. Functionally, RING-finger E3 ubiquitin ligase which catalyzes the formation of both 'Lys-48'- and 'Lys-63'-linked polyubiquitin chains. Plays an important role in virulence by acting as an anti-apoptotic factor. In Cynomys gunnisoni (Gunnison's prairie dog), this protein is Host range factor p28 (OPG021).